An 86-amino-acid polypeptide reads, in one-letter code: Diphthamide biosynthesis protein 3 (86 aa).

The DPH-type MB domain occupies 4 to 60 (YHDEVEIEDFEYDEEEEMYYYPCPCGDRFQISKEELIEGEEVATCPSCSLVIKVIYD). 4 residues coordinate Fe cation: Cys26, Cys28, Cys48, and Cys51.

It belongs to the DPH3 family. In terms of assembly, component of the 2-(3-amino-3-carboxypropyl)histidine synthase complex composed of Dph1, Dph2, Dph3 and a NADH-dependent reductase. Requires Fe(2+) as cofactor.

It carries out the reaction [3Fe-4S](1+)-[protein] + Fe(2+)-[Dph3] = [3Fe-4S](0)-[protein] + Fe(3+)-[Dph3]. The catalysed reaction is 2 [3Fe-4S](0)-[protein] + 2 Fe(2+)-[Dph3] + NADH = 2 [4Fe-4S](1+)-[protein] + 2 [Dph3] + NAD(+) + H(+). It functions in the pathway protein modification; peptidyl-diphthamide biosynthesis. Functionally, required for the first step of diphthamide biosynthesis, a post-translational modification of histidine which occurs in elongation factor 2. Dph1 and Dph2 transfer a 3-amino-3-carboxypropyl (ACP) group from S-adenosyl-L-methionine (SAM) to a histidine residue, the reaction is assisted by a reduction system comprising Dph3 and a NADH-dependent reductase. Acts as an electron donor to reduce the Fe-S cluster in Dph1-Dph2 keeping the [4Fe-4S] clusters in the active and reduced state. Restores iron to Dph1-Dph2 iron-sulfur clusters which have degraded from [4Fe-4S] to [3Fe-4S] by donating an iron atom to reform [4Fe-4S] clusters, in a manner dependent on the presence of elongation factor 2 and SAM. Associates with the elongator complex and is required for tRNA Wobble base modifications mediated by the elongator complex. The elongator complex is required for multiple tRNA modifications, including mcm5U (5-methoxycarbonylmethyl uridine), mcm5s 2U (5-methoxycarbonylmethyl-2-thiouridine), and ncm5U (5-carbamoylmethyl uridine). This is Diphthamide biosynthesis protein 3 from Drosophila melanogaster (Fruit fly).